We begin with the raw amino-acid sequence, 131 residues long: Large ribosomal subunit protein mL60 (131 aa).

A mitochondrion-targeting transit peptide spans 1–12 (MFGPFKLTSPVA).

Belongs to the mitochondrion-specific ribosomal protein mL60 family. As to quaternary structure, component of the mitochondrial large ribosomal subunit (mt-LSU). Mature yeast 74S mitochondrial ribosomes consist of a small (37S) and a large (54S) subunit. The 37S small subunit contains a 15S ribosomal RNA (15S mt-rRNA) and 34 different proteins. The 54S large subunit contains a 21S rRNA (21S mt-rRNA) and 46 different proteins.

The protein resides in the mitochondrion. Functionally, component of the mitochondrial ribosome (mitoribosome), a dedicated translation machinery responsible for the synthesis of mitochondrial genome-encoded proteins, including at least some of the essential transmembrane subunits of the mitochondrial respiratory chain. The mitoribosomes are attached to the mitochondrial inner membrane and translation products are cotranslationally integrated into the membrane. The polypeptide is Large ribosomal subunit protein mL60 (MRPL31) (Saccharomyces cerevisiae (strain ATCC 204508 / S288c) (Baker's yeast)).